Here is a 98-residue protein sequence, read N- to C-terminus: Probable sodium channel toxin Ts27 (98 aa).

Residues 1 to 22 form the signal peptide; sequence MYNMVSLFIVAVLLLTYANVEG. 4 disulfide bridges follow: cysteine 36-cysteine 88, cysteine 40-cysteine 63, cysteine 49-cysteine 68, and cysteine 53-cysteine 70.

It belongs to the long (4 C-C) scorpion toxin superfamily. Sodium channel inhibitor family. In terms of tissue distribution, expressed by the venom gland.

Its subcellular location is the secreted. In terms of biological role, probable sodium channel toxin. This is Probable sodium channel toxin Ts27 from Tityus serrulatus (Brazilian scorpion).